Reading from the N-terminus, the 198-residue chain is Peptidyl-tRNA hydrolase (198 aa).

Y15 is a binding site for tRNA. H20 acts as the Proton acceptor in catalysis. Residues F66, N68, and N114 each coordinate tRNA.

This sequence belongs to the PTH family. As to quaternary structure, monomer.

It is found in the cytoplasm. The enzyme catalyses an N-acyl-L-alpha-aminoacyl-tRNA + H2O = an N-acyl-L-amino acid + a tRNA + H(+). Hydrolyzes ribosome-free peptidyl-tRNAs (with 1 or more amino acids incorporated), which drop off the ribosome during protein synthesis, or as a result of ribosome stalling. Its function is as follows. Catalyzes the release of premature peptidyl moieties from peptidyl-tRNA molecules trapped in stalled 50S ribosomal subunits, and thus maintains levels of free tRNAs and 50S ribosomes. The chain is Peptidyl-tRNA hydrolase from Cupriavidus taiwanensis (strain DSM 17343 / BCRC 17206 / CCUG 44338 / CIP 107171 / LMG 19424 / R1) (Ralstonia taiwanensis (strain LMG 19424)).